Here is a 25-residue protein sequence, read N- to C-terminus: Ranatuerin-1 (25 aa).

Cys19 and Cys25 form a disulfide bridge.

Belongs to the frog skin active peptide (FSAP) family. Ranatuerin subfamily. Expressed by the skin glands.

Its subcellular location is the secreted. In terms of biological role, antibacterial activity against Gram-positive bacterium S.aureus (MIC=50 uM) and Gram-negative bacterium E.coli (MIC=2 uM). Has activity against C.albicans (MIC=70 uM). Shows no detectable hemolytic activity towards human erythrocytes. The chain is Ranatuerin-1 from Aquarana catesbeiana (American bullfrog).